A 509-amino-acid chain; its full sequence is Maturase K (509 aa).

Belongs to the intron maturase 2 family. MatK subfamily.

It is found in the plastid. Its subcellular location is the chloroplast. Usually encoded in the trnK tRNA gene intron. Probably assists in splicing its own and other chloroplast group II introns. The chain is Maturase K from Citrus sinensis (Sweet orange).